The chain runs to 897 residues: Cytokine receptor common subunit beta (897 aa).

An N-terminal signal peptide occupies residues 1-16 (MVLAQGLLSMALLALC). Topologically, residues 17 to 443 (WERSLAGAEE…WDTESVLPMW (427 aa)) are extracellular. Cys35 and Cys45 form a disulfide bridge. Asn58 is a glycosylation site (N-linked (GlcNAc...) asparagine). Cystine bridges form between Cys75–Cys96 and Cys86–Cys91. Residues 133–240 (PPEPRDLQIS…PEVCWDSQPG (108 aa)) enclose the Fibronectin type-III 1 domain. Asn191 is a glycosylation site (N-linked (GlcNAc...) asparagine). Intrachain disulfides connect Cys250-Cys260 and Cys289-Cys306. The 98-residue stretch at 339-436 (QMAPPSLNVT…EWSEARSWDT (98 aa)) folds into the Fibronectin type-III 2 domain. Asn346 carries an N-linked (GlcNAc...) asparagine glycan. Positions 425–429 (WSEWS) match the WSXWS motif motif. A helical membrane pass occupies residues 444–460 (VLALIVIFLTIAVLLAL). Over 461-897 (RFCGIYGYRL…WEVNKPGEVC (437 aa)) the chain is Cytoplasmic. Residues 474-482 (WEEKIPNPS) carry the Box 1 motif motif. Disordered stretches follow at residues 498–517 (GSMSAFTSGSPPHQGPWGSR), 532–630 (SEVS…EYLC), 648–812 (PGQA…QPEG), and 830–849 (PGPLSLRSKPSSPGPGPEIK). Over residues 564 to 574 (EQPPSPQPGPP) the composition is skewed to pro residues. A compositionally biased stretch (low complexity) spans 723–752 (SGASSVSLVPSLGLPSDQTPSLCPGLASGP). Residue Tyr766 is modified to Phosphotyrosine. The span at 830-840 (PGPLSLRSKPS) shows a compositional bias: low complexity.

Belongs to the type I cytokine receptor family. Type 4 subfamily. Heterodimer of an alpha and a beta subunit. The beta subunit is common to the IL3, IL5 and GM-CSF receptors. The signaling GM-CSF receptor complex is a dodecamer of two head-to-head hexamers of two alpha, two beta, and two ligand subunits. Interacts with TMEM102; this interaction occurs preferentially in the absence of CSF2. Interacts with FCER1G; this interaction is direct. Interacts with LYN. Interacts with JAK1. May be phosphorylated by LYN.

Its subcellular location is the membrane. In terms of biological role, cell surface receptor that plays a role in immune response and controls the production and differentiation of hematopoietic progenitor cells into lineage-restricted cells. Acts by forming an heterodimeric receptor through interaction with different partners such as IL3RA, IL5RA or CSF2RA. In turn, participates in various signaling pathways including interleukin-3, interleukin-5 and granulocyte-macrophage colony-stimulating factor/CSF2 pathways. In unstimulated conditions, interacts constitutively with JAK1 and ligand binding leads to JAK1 stimulation and subsequent activation of the JAK-STAT pathway. The chain is Cytokine receptor common subunit beta (CSF2RB) from Homo sapiens (Human).